The sequence spans 1021 residues: Ribosome quality control complex subunit 2 (1021 aa).

Residues 348–388 (IEAQKLKKRAHDRLATAERRLESAKEDQARKLQSLQDAQAT) adopt a coiled-coil conformation. A disordered region spans residues 457–484 (NPESVDNSDESSETSDDDLDDSDDDNKV). Over residues 462–480 (DNSDESSETSDDDLDDSDD) the composition is skewed to acidic residues. Serine 478 is subject to Phosphoserine. Coiled coils occupy residues 507–546 (NARK…DLKR) and 698–727 (DEKS…LKME). Composition is skewed to polar residues over residues 746–761 (YNED…TTGS) and 839–856 (ISSQ…TPTA). 2 disordered regions span residues 746–801 (YNED…TALE) and 832–905 (HAAR…VESF). Over residues 876–905 (DQSRNSEAENEKGLSTEQRDEKKHAKVESF) the composition is skewed to basic and acidic residues.

Belongs to the NEMF family. In terms of assembly, component of the ribosome quality control complex (RQC), composed of the E3 ubiquitin ligase rkr1/ltn1, rqc1 and mtr1/rqc2, as well as cdc48 and its ubiquitin-binding cofactors associated with the 60S ribosomal subunit. RQC2 binds to the 40S-binding surface of tRNAs.

It localises to the cytoplasm. In terms of biological role, key component of the ribosome quality control complex (RQC), a ribosome-associated complex that mediates the extraction of incompletely synthesized nascent chains from stalled ribosomes as well as their ubiquitin-mediated proteasomal degradation. Thereby, frees 60S subunit ribosomes from the stalled translation complex and prevents the accumulation of nascent polypeptide chains that are potentially toxic for the cell. Within the RQC complex, mtr1/rqc2 specifically binds stalled 60S ribosomal subunits by recognizing an exposed, nascent chain-conjugated tRNA moiety and promotes the recruitment of rkr1/ltn1 to stalled 60S subunits. Following binding to stalled 60S ribosomal subunits, mtr1/rqc2 mediates CAT tailing by recruiting alanine- and threonine-charged tRNA to the A-site and directing the elongation of stalled nascent chains independently of mRNA or 40S subunits, leading to non-templated C-terminal Ala and Thr extensions (CAT tails). CAT tails promote the rkr1/ltn1-mediated ubiquitination of incompletely synthesized nascent polypeptides: CAT tailing facilitates rkr1/ltn1-dependent ubiquitination by exposing lysine residues that would otherwise remain buried in the ribosomal exit tunnel. Following ubiquitination, incompletely synthesized nascent polypeptides are recognized by CDC48 and degraded by the proteasome. CAT-tailed proteins tend to aggregate and sequester chaperones and can induce proteotoxic stress; their rkr1/ltn1-dependent ubiquitination and degradation is required to prevent proteotoxic stress. In Schizosaccharomyces pombe (strain 972 / ATCC 24843) (Fission yeast), this protein is Ribosome quality control complex subunit 2.